The sequence spans 328 residues: UPF0421 protein SSP0904 (328 aa).

A run of 4 helical transmembrane segments spans residues Leu-26 to Ile-46, Leu-61 to Gln-81, Phe-84 to Val-104, and Leu-132 to Pro-152.

Belongs to the UPF0421 family.

It localises to the cell membrane. This chain is UPF0421 protein SSP0904, found in Staphylococcus saprophyticus subsp. saprophyticus (strain ATCC 15305 / DSM 20229 / NCIMB 8711 / NCTC 7292 / S-41).